Reading from the N-terminus, the 354-residue chain is Methylthioribose-1-phosphate isomerase (354 aa).

Substrate-binding positions include 58–60, Arg-101, and Gln-204; that span reads RGA. Residue Asp-245 is the Proton donor of the active site. Residue 255–256 participates in substrate binding; that stretch reads NK.

This sequence belongs to the eIF-2B alpha/beta/delta subunits family. MtnA subfamily.

The catalysed reaction is 5-(methylsulfanyl)-alpha-D-ribose 1-phosphate = 5-(methylsulfanyl)-D-ribulose 1-phosphate. It functions in the pathway amino-acid biosynthesis; L-methionine biosynthesis via salvage pathway; L-methionine from S-methyl-5-thio-alpha-D-ribose 1-phosphate: step 1/6. In terms of biological role, catalyzes the interconversion of methylthioribose-1-phosphate (MTR-1-P) into methylthioribulose-1-phosphate (MTRu-1-P). The polypeptide is Methylthioribose-1-phosphate isomerase (Stenotrophomonas maltophilia (strain R551-3)).